A 236-amino-acid polypeptide reads, in one-letter code: Purine nucleoside phosphorylase DeoD-type (236 aa).

His5 provides a ligand contact to a purine D-ribonucleoside. Residues Gly21, Arg25, Arg44, and 88–91 (RVGT) contribute to the phosphate site. Residues 180 to 182 (EME) and 204 to 205 (SD) contribute to the a purine D-ribonucleoside site. Asp205 serves as the catalytic Proton donor.

Belongs to the PNP/UDP phosphorylase family. As to quaternary structure, homohexamer; trimer of homodimers.

It carries out the reaction a purine D-ribonucleoside + phosphate = a purine nucleobase + alpha-D-ribose 1-phosphate. It catalyses the reaction a purine 2'-deoxy-D-ribonucleoside + phosphate = a purine nucleobase + 2-deoxy-alpha-D-ribose 1-phosphate. In terms of biological role, catalyzes the reversible phosphorolytic breakdown of the N-glycosidic bond in the beta-(deoxy)ribonucleoside molecules, with the formation of the corresponding free purine bases and pentose-1-phosphate. The sequence is that of Purine nucleoside phosphorylase DeoD-type from Shewanella frigidimarina (strain NCIMB 400).